Consider the following 104-residue polypeptide: ATP-dependent Clp protease adapter protein ClpS (104 aa).

This sequence belongs to the ClpS family. Binds to the N-terminal domain of the chaperone ClpA.

In terms of biological role, involved in the modulation of the specificity of the ClpAP-mediated ATP-dependent protein degradation. This chain is ATP-dependent Clp protease adapter protein ClpS, found in Burkholderia ambifaria (strain MC40-6).